The primary structure comprises 139 residues: GPI-anchored protein 53 (139 aa).

A signal peptide spans 1–17; the sequence is MKFQLLTLVSIATTTLA. 2 stretches are compositionally biased toward low complexity: residues 57–69 and 77–101; these read TITSSSSTTTTTT and TSTTSASSTTTTSTKSNSTSPSSSS. A disordered region spans residues 57 to 115; it reads TITSSSSTTTTTTAKKDKKTTSTTSASSTTTTSTKSNSTSPSSSSSKKHKSETASITKT. Asn-93 is a glycosylation site (N-linked (GlcNAc...) asparagine). Gly-116 is lipidated: GPI-anchor amidated glycine. The propeptide at 117–139 is removed in mature form; that stretch reads GADSVAAAAAVGGPILAALALLL.

It is found in the cell membrane. This chain is GPI-anchored protein 53 (PGA53), found in Candida albicans (strain SC5314 / ATCC MYA-2876) (Yeast).